Consider the following 218-residue polypeptide: Guanylate kinase (218 aa).

Residues 10–190 (GLLIILSSPS…TEERLKTIIT (181 aa)) form the Guanylate kinase-like domain. 17 to 24 (SPSGAGKS) is an ATP binding site.

It belongs to the guanylate kinase family.

It localises to the cytoplasm. It catalyses the reaction GMP + ATP = GDP + ADP. Its function is as follows. Essential for recycling GMP and indirectly, cGMP. The polypeptide is Guanylate kinase (Jannaschia sp. (strain CCS1)).